The following is a 292-amino-acid chain: 4-hydroxy-tetrahydrodipicolinate synthase (292 aa).

T45 is a pyruvate binding site. Catalysis depends on Y133, which acts as the Proton donor/acceptor. Residue K161 is the Schiff-base intermediate with substrate of the active site. I203 contacts pyruvate.

It belongs to the DapA family. As to quaternary structure, homodimer.

The protein resides in the cytoplasm. The catalysed reaction is L-aspartate 4-semialdehyde + pyruvate = (2S,4S)-4-hydroxy-2,3,4,5-tetrahydrodipicolinate + H2O + H(+). It functions in the pathway amino-acid biosynthesis; L-lysine biosynthesis via DAP pathway; (S)-tetrahydrodipicolinate from L-aspartate: step 3/4. Catalyzes the condensation of (S)-aspartate-beta-semialdehyde [(S)-ASA] and pyruvate to 4-hydroxy-tetrahydrodipicolinate (HTPA). This is 4-hydroxy-tetrahydrodipicolinate synthase from Pseudomonas putida (strain W619).